The following is a 243-amino-acid chain: I/6 autoantigen (243 aa).

The 36-residue stretch at 110-145 (LSVEEVDALFNALDSDNRGYVSVDEFMDALYGEEGR) folds into the EF-hand domain. Residues 166-243 (PSWRMRPTPK…PPKQKAGCGC (78 aa)) form a disordered region. Residues 176–196 (PTRKLRQKRKREQGQKRKQGQ) show a composition bias toward basic residues. 6 tandem repeats follow at residues 181-188 (RQKRKREQ), 189-196 (GQKRKQGQ), 197-204 (RQKQEQGQ), 205-212 (RQKREQGQ), 213-220 (RQKQEQGQ), and 221-228 (KRKRERGG). Residues 181 to 228 (RQKRKREQGQKRKQGQRQKQEQGQRQKREQGQRQKQEQGQKRKRERGG) form a 6 X 8 AA tandem repeats region. Residues 198–220 (QKQEQGQRQKREQGQRQKQEQGQ) are compositionally biased toward basic and acidic residues.

It localises to the cytoplasm. The protein localises to the cytoskeleton. In terms of biological role, microtubule-associated protein that may be involved in cross-linking microtubules. This is I/6 autoantigen from Trypanosoma brucei brucei.